The primary structure comprises 159 residues: MSDEEHQFESKADAGASKTYPQQAGTIRKNGHIVIKGRPCKVVEVSTSKTGKHGHAKCHFVAIDIFTGKKLEDIVPSSHNCDVPHVNRTDYQLIDISEDGFVSLLTENGNTKDDLRLPTDDNLLTQIKDGFAEGKDLVVSVMSAMGEEQICALKDIGPK.

A compositionally biased stretch (basic and acidic residues) spans 1–12 (MSDEEHQFESKA). The disordered stretch occupies residues 1-23 (MSDEEHQFESKADAGASKTYPQQ). Lys52 bears the Hypusine mark.

It belongs to the eIF-5A family. Post-translationally, lys-52 undergoes hypusination, a unique post-translational modification that consists in the addition of a butylamino group from spermidine to lysine side chain, leading to the formation of the unusual amino acid hypusine. eIF-5As are the only known proteins to undergo this modification, which is essential for their function.

Translation factor that promotes translation elongation and termination, particularly upon ribosome stalling at specific amino acid sequence contexts. Binds between the exit (E) and peptidyl (P) site of the ribosome and promotes rescue of stalled ribosome: specifically required for efficient translation of polyproline-containing peptides as well as other motifs that stall the ribosome. Acts as a ribosome quality control (RQC) cofactor by joining the RQC complex to facilitate peptidyl transfer during CAT tailing step. In Nicotiana plumbaginifolia (Leadwort-leaved tobacco), this protein is Eukaryotic translation initiation factor 5A-2 (EIF-5A2).